The following is a 132-amino-acid chain: uncharacterized protein (132 aa).

A signal peptide spans 1 to 18 (MRKIISMLFIPLFIFAMA).

This is an uncharacterized protein from Aquifex aeolicus (strain VF5).